Reading from the N-terminus, the 181-residue chain is NADH-quinone oxidoreductase subunit B (181 aa).

Residues Cys45, Cys46, Cys111, and Cys140 each contribute to the [4Fe-4S] cluster site.

This sequence belongs to the complex I 20 kDa subunit family. In terms of assembly, NDH-1 is composed of 15 different subunits. Subunits NuoB, C, D, E, F, and G constitute the peripheral sector of the complex. It depends on [4Fe-4S] cluster as a cofactor.

Its subcellular location is the cell membrane. The enzyme catalyses a quinone + NADH + 5 H(+)(in) = a quinol + NAD(+) + 4 H(+)(out). NDH-1 shuttles electrons from NADH, via FMN and iron-sulfur (Fe-S) centers, to quinones in the respiratory chain. The immediate electron acceptor for the enzyme in this species is believed to be a menaquinone. Couples the redox reaction to proton translocation (for every two electrons transferred, four hydrogen ions are translocated across the cytoplasmic membrane), and thus conserves the redox energy in a proton gradient. The sequence is that of NADH-quinone oxidoreductase subunit B from Deinococcus radiodurans (strain ATCC 13939 / DSM 20539 / JCM 16871 / CCUG 27074 / LMG 4051 / NBRC 15346 / NCIMB 9279 / VKM B-1422 / R1).